A 510-amino-acid polypeptide reads, in one-letter code: MIWHVQNENFILDSTRIFMKAFHLLLFDGSFIFPECILIFGLILLLMIDSTSDQKDRPWFYFISSTSLVMSIAALLFRWREEPMISFSGNFQTNNFNEIFQFLILLCSTLCIPLSVEYIECTEMAITEFLLFVLTATLGGMFLCGANDSITIFVAPECFSLCSYLLSGYTKRDVRSNEATMKYLLMGGASSSILVHGFSWLYGLSGGEIELQEIVNGLINTQMYNSPGISIALIFITVGIGFKLSLAPFHQWTPDVYEGSPTPVVAFLSVTSKVAASASATRIFDIPFYFSSNEWHLLLEILAILSMILGNLIAITQTSMKRMLAYSSIGQIGYVIIGIIVGDSNDGYASMITYMLFYISMNLGTFARIVLFGLRTGTDNIRDYAGLYTKDPFLALSLALCLLSLGGLPPLAGFFGKLHLFWCGWQAGLYFLVSIGLLTSVVSIYYYLKIIKLLMTGRNQEITPHVRNYRRSPLRSNNSIELSMIVCVIASTIPGISMNPILAIAQDTLF.

Transmembrane regions (helical) follow at residues 24 to 44 (LLLFDGSFIFPECILIFGLIL), 59 to 79 (WFYFISSTSLVMSIAALLFRW), 99 to 119 (IFQFLILLCSTLCIPLSVEYI), 124 to 144 (MAITEFLLFVLTATLGGMFLC), 150 to 170 (ITIFVAPECFSLCSYLLSGYT), 184 to 204 (LLMGGASSSILVHGFSWLYGL), 229 to 249 (ISIALIFITVGIGFKLSLAPF), 295 to 315 (WHLLLEILAILSMILGNLIAI), 323 to 343 (MLAYSSIGQIGYVIIGIIVGD), 354 to 374 (YMLFYISMNLGTFARIVLFGL), 395 to 415 (ALSLALCLLSLGGLPPLAGFF), 418 to 438 (LHLFWCGWQAGLYFLVSIGLL), and 484 to 504 (MIVCVIASTIPGISMNPILAI).

Belongs to the complex I subunit 2 family. In terms of assembly, NDH is composed of at least 16 different subunits, 5 of which are encoded in the nucleus.

Its subcellular location is the plastid. The protein resides in the chloroplast thylakoid membrane. It catalyses the reaction a plastoquinone + NADH + (n+1) H(+)(in) = a plastoquinol + NAD(+) + n H(+)(out). The enzyme catalyses a plastoquinone + NADPH + (n+1) H(+)(in) = a plastoquinol + NADP(+) + n H(+)(out). Functionally, NDH shuttles electrons from NAD(P)H:plastoquinone, via FMN and iron-sulfur (Fe-S) centers, to quinones in the photosynthetic chain and possibly in a chloroplast respiratory chain. The immediate electron acceptor for the enzyme in this species is believed to be plastoquinone. Couples the redox reaction to proton translocation, and thus conserves the redox energy in a proton gradient. The protein is NAD(P)H-quinone oxidoreductase subunit 2 B, chloroplastic of Acorus calamus (Sweet flag).